The sequence spans 312 residues: Methionyl-tRNA formyltransferase (312 aa).

(6S)-5,6,7,8-tetrahydrofolate is bound at residue 107–110; sequence SLLP.

Belongs to the Fmt family.

It catalyses the reaction L-methionyl-tRNA(fMet) + (6R)-10-formyltetrahydrofolate = N-formyl-L-methionyl-tRNA(fMet) + (6S)-5,6,7,8-tetrahydrofolate + H(+). Functionally, attaches a formyl group to the free amino group of methionyl-tRNA(fMet). The formyl group appears to play a dual role in the initiator identity of N-formylmethionyl-tRNA by promoting its recognition by IF2 and preventing the misappropriation of this tRNA by the elongation apparatus. This is Methionyl-tRNA formyltransferase from Borreliella burgdorferi (strain ZS7) (Borrelia burgdorferi).